The following is a 211-amino-acid chain: Envelope protein UL45 homolog (211 aa).

At 1-46 the chain is on the intravirion side; the sequence is MMSPTPEDDRDLVVVRGRLRMMDNGAEHDRERRSYTAWPHLCCGCT. The helical; Signal-anchor for type II membrane protein transmembrane segment at 47–67 threads the bilayer; that stretch reads IGIILTMFVIATTLLLASLFA. The Virion surface segment spans residues 68 to 211; sequence FSYMSLESGT…SSILSNAIMK (144 aa). N-linked (GlcNAc...) asparagine; by host glycosylation is found at Asn96 and Asn133.

The protein belongs to the herpesviridae HHV-1 UL45 family.

The protein localises to the virion membrane. This chain is Envelope protein UL45 homolog (UL45H), found in Gallid herpesvirus 2 (strain bc-1) (GaHV-2).